A 350-amino-acid chain; its full sequence is MVEKEEAGGGGGGGISEEEAAQYDRQIRLWGLEAQKRLRASRVLIVGMKGLGAEIAKNLILAGVKGLTMLDHEQVSPEDPGAQFLIQTGSVGRNRAEASLERAQNLNPMVDVKVDTEDVEKKPESFFTKFDAVCLTCCSRDVIIKVDQICHRNSIKFFTGDVFGYHGYTFANLGEHEFVEEKTKVAKVSQGVEDGPEAKRAKLDSSETTMVKKKVLFCPVKEALEVDWSGEKAKAALKRTAPDYFLLQVLLKFRTDKGRDPTSESYKEDAELLLQIRNDVFDSLGISPDLLPDDFVRYCFSEMAPVCAVVGGILAQEIVKALSQRDPPHNNFFFFDGMKGSGIVECLGPQ.

Position 1 is an N-acetylmethionine (methionine 1). At valine 2 the chain carries N-acetylvaline; in SUMO-activating enzyme subunit 1, N-terminally processed. Serine 16 is subject to Phosphoserine. Lysine 202 is modified (N6-acetyllysine).

Belongs to the ubiquitin-activating E1 family. As to quaternary structure, heterodimer of SAE1 and UBA2/SAE2. The heterodimer corresponds to the two domains that are encoded on a single polypeptide chain in ubiquitin-activating enzyme E1. Interacts with UBE2I. As to expression, broadly expressed, with highest levels in testis.

It is found in the nucleus. Its pathway is protein modification; protein sumoylation. Functionally, the heterodimer acts as an E1 ligase for SUMO1, SUMO2, SUMO3, and probably SUMO4. It mediates ATP-dependent activation of SUMO proteins followed by formation of a thioester bond between a SUMO protein and a conserved active site cysteine residue on UBA2/SAE2. This Mus musculus (Mouse) protein is SUMO-activating enzyme subunit 1 (Sae1).